We begin with the raw amino-acid sequence, 578 residues long: Leucine-rich repeat-containing protein 15 (578 aa).

The first 21 residues, 1–21, serve as a signal peptide directing secretion; that stretch reads MPLKHYLLLLVGCQAWALGLA. Positions 22–53 constitute an LRRNT domain; the sequence is YYGCPSECTCSRASQVECTGARIVAMPTPLPW. At 22–535 the chain is on the extracellular side; sequence YYGCPSECTC…TWGMTEAQSG (514 aa). LRR repeat units lie at residues 54-75, 78-99, 102-123, 126-147, 150-171, 174-195, 198-219, 222-243, 246-267, 270-291, 294-315, 318-339, 342-363, 366-387, and 390-411; these read NAMS…LFLN, ALIA…AFRN, SLRY…VFQD, NLES…QFSQ, NLRE…AFDH, GLTK…LFQH, NLQV…TFDA, NLQE…LFHN, NLQR…IFMQ, QLNK…VFGP, NLRE…TFSH, QLQV…AFNG, NLRE…VFRS, NLQN…IFAN, and GLTT…IFDH. Asn-75 carries an N-linked (GlcNAc...) asparagine glycan. Asn-369 carries an N-linked (GlcNAc...) asparagine glycan. The LRRCT domain maps to 423-473; the sequence is NPWRCDSDILPLHNWLLLNRARLGTDTLPVCSSPANVRGQSLVIININFPG. The disordered stretch occupies residues 476 to 500; that stretch reads VQGPETPEVPSYPDTPSYPDTTSVS. The chain crosses the membrane as a helical span at residues 536–556; sequence LAIAAIVIGIIALACSLAACI. At 557–578 the chain is on the cytoplasmic side; that stretch reads CCCCCKKRSQAVLMQMKAPNEC.

The protein resides in the cell membrane. The protein is Leucine-rich repeat-containing protein 15 (Lrrc15) of Rattus norvegicus (Rat).